We begin with the raw amino-acid sequence, 264 residues long: 3-methyl-2-oxobutanoate hydroxymethyltransferase (264 aa).

The Mg(2+) site is built by Asp45 and Asp84. Residues 45-46 (DS), Asp84, and Lys112 contribute to the 3-methyl-2-oxobutanoate site. Glu114 lines the Mg(2+) pocket. Residue Glu181 is the Proton acceptor of the active site.

It belongs to the PanB family. In terms of assembly, homodecamer; pentamer of dimers. It depends on Mg(2+) as a cofactor.

It localises to the cytoplasm. The catalysed reaction is 3-methyl-2-oxobutanoate + (6R)-5,10-methylene-5,6,7,8-tetrahydrofolate + H2O = 2-dehydropantoate + (6S)-5,6,7,8-tetrahydrofolate. Its pathway is cofactor biosynthesis; (R)-pantothenate biosynthesis; (R)-pantoate from 3-methyl-2-oxobutanoate: step 1/2. In terms of biological role, catalyzes the reversible reaction in which hydroxymethyl group from 5,10-methylenetetrahydrofolate is transferred onto alpha-ketoisovalerate to form ketopantoate. The chain is 3-methyl-2-oxobutanoate hydroxymethyltransferase from Shewanella amazonensis (strain ATCC BAA-1098 / SB2B).